A 552-amino-acid chain; its full sequence is Phosphoglucomutase (552 aa).

Catalysis depends on Ser143, which acts as the Phosphoserine intermediate. Residues Ser143, Asp295, Asp297, and Asp299 each coordinate Mg(2+).

It belongs to the phosphohexose mutase family. The cofactor is Mg(2+).

It catalyses the reaction alpha-D-glucose 1-phosphate = alpha-D-glucose 6-phosphate. It functions in the pathway glycolipid metabolism; diglucosyl-diacylglycerol biosynthesis. Functionally, catalyzes the interconversion between glucose-6-phosphate and alpha-glucose-1-phosphate. This is the first step in the biosynthesis of diglucosyl-diacylglycerol (Glc2-DAG), i.e. the predominant glycolipid found in the S.aureus membrane, which is also used as a membrane anchor for lipoteichoic acid (LTA). The polypeptide is Phosphoglucomutase (pgcA) (Staphylococcus aureus (strain Mu50 / ATCC 700699)).